Reading from the N-terminus, the 66-residue chain is Probable Sec-independent protein translocase protein TatE (66 aa).

A helical transmembrane segment spans residues 1–21; that stretch reads MEGISITKLLVIAVLIVLLFG. The interval 46–66 is disordered; the sequence is ETPAAKKSDGAEAAPRVENKE.

Belongs to the TatA/E family. TatE subfamily.

Its subcellular location is the cell inner membrane. Its function is as follows. Part of the twin-arginine translocation (Tat) system that transports large folded proteins containing a characteristic twin-arginine motif in their signal peptide across membranes. TatE shares overlapping functions with TatA. This Edwardsiella piscicida protein is Probable Sec-independent protein translocase protein TatE.